Reading from the N-terminus, the 366-residue chain is RISC-loading complex subunit TARBP2 (366 aa).

Sufficient for interaction with PRKRA stretches follow at residues 22–105 (MLAA…EPAL), 152–234 (SPQQ…DARD), and 287–366 (LGAL…AGSK). In terms of domain architecture, DRBM 1 spans 30-97 (TPISLLQEYG…AEVALKHLKG (68 aa)). S152 bears the Phosphoserine mark. DRBM domains follow at residues 159–227 (NPVG…RVHT) and 293–361 (ACCR…YLKI). Residues 228 to 366 (VPLDARDGNE…QYLKIMAGSK (139 aa)) form a sufficient for interaction with DICER1 region.

Belongs to the TARBP2 family. In terms of assembly, self-associates. Component of the RISC loading complex (RLC), or micro-RNA (miRNA) loading complex (miRLC), which is composed of DICER1, AGO2 and TARBP2. Note that the trimeric RLC/miRLC is also referred to as RISC. Interacts with EIF2AK2/PKR and inhibits its protein kinase activity. Interacts with DHX9 and PRKRA. Interacts with DICER1, AGO2, MOV10, EIF6 and RPL7A (60S ribosome subunit); they form a large RNA-induced silencing complex (RISC). Interacts with IRF7; this interaction prevents IRF7 phosphorylation and activation. (Microbial infection) Interacts with FTSJ3; forms a complex with FTSJ3 and HIV-1 TAR RNA. As to quaternary structure, (Microbial infection) Interacts with ebolavirus VP30; this interaction, which occurs only in the presence of siRNA, prevents TARBP2 binding to DICER1 and thus allows the virus to counteract host RNA silencing. In terms of assembly, (Microbial infection) Interacts with ebolavirus VP35; this interaction prevents TARBP2 binding to DICER1 and thus allows the virus to counteract host RNA silencing.

The protein localises to the cytoplasm. It is found in the perinuclear region. The protein resides in the nucleus. Functionally, required for formation of the RNA induced silencing complex (RISC). Component of the RISC loading complex (RLC), also known as the micro-RNA (miRNA) loading complex (miRLC), which is composed of DICER1, AGO2 and TARBP2. Within the RLC/miRLC, DICER1 and TARBP2 are required to process precursor miRNAs (pre-miRNAs) to mature miRNAs and then load them onto AGO2. AGO2 bound to the mature miRNA constitutes the minimal RISC and may subsequently dissociate from DICER1 and TARBP2. May also play a role in the production of short interfering RNAs (siRNAs) from double-stranded RNA (dsRNA) by DICER1. Binds in vitro to the PRM1 3'-UTR. Seems to act as a repressor of translation. For some pre-miRNA substrates, may also alter the choice of cleavage site by DICER1. Negatively regulates IRF7-mediated IFN-beta signaling triggered by viral infection by inhibiting the phosphorylation of IRF7 and promoting its 'Lys'-48-linked ubiquitination and degradation. Its function is as follows. (Microbial infection) Binds to the HIV-1 TAR RNA which is located in the long terminal repeat (LTR) of HIV-1, and stimulates translation of TAR-containing RNAs. This is achieved in part at least by binding to and inhibiting EIF2AK2/PKR, thereby reducing phosphorylation and inhibition of EIF2S1/eIF-2-alpha. May also promote translation of TAR-containing RNAs independently of EIF2AK2/PKR. Mediates recruitment of FTSJ3 methyltransferase to HIV-1 RNA, leading to 2'-O-methylation of the viral genome, allowing HIV-1 to escape the innate immune system. The sequence is that of RISC-loading complex subunit TARBP2 from Homo sapiens (Human).